We begin with the raw amino-acid sequence, 233 residues long: ATP synthase subunit a (233 aa).

Transmembrane regions (helical) follow at residues 29-49 (FKHV…GLIV), 86-106 (VFPL…LGLV), 118-135 (TNAA…YQGL), 188-208 (VLFF…LFLL), and 209-229 (GKVL…KGAF).

It belongs to the ATPase A chain family. As to quaternary structure, F-type ATPases have 2 components, CF(1) - the catalytic core - and CF(0) - the membrane proton channel. CF(1) has five subunits: alpha(3), beta(3), gamma(1), delta(1), epsilon(1). CF(0) has three main subunits: a(1), b(2) and c(9-12). The alpha and beta chains form an alternating ring which encloses part of the gamma chain. CF(1) is attached to CF(0) by a central stalk formed by the gamma and epsilon chains, while a peripheral stalk is formed by the delta and b chains.

Its subcellular location is the cell inner membrane. Key component of the proton channel; it plays a direct role in the translocation of protons across the membrane. This chain is ATP synthase subunit a, found in Nitratidesulfovibrio vulgaris (strain ATCC 29579 / DSM 644 / CCUG 34227 / NCIMB 8303 / VKM B-1760 / Hildenborough) (Desulfovibrio vulgaris).